The chain runs to 411 residues: MTNGPIQVNSEIGKLKTVLLKRPGKELENLVPDYLDGLLFDDIPFLKVAQQEHDHFAQVLQDEGIEVLYLEKLAAQSIEDSNVREQFIDDVLAESRKTILGHEKEIKKLFSTLSNQALINKIMAGVRKEEIQLESTHLVEYMDDKYPFYLDPMPNLYFTRDPQASIGRGMTVNRMFWRARRRESIFISYILKHHPRFKDENIPLWVDRDCPFNIEGGDELVLSKDVLAIGISERTSAQAIERLARRIFKDPLSTFKKVVAIEIPTSRTFMHLDTVCTMIDYDKFTTHSAILKSEGNMNIFIIEYDDKAEDIKIQHSSHLKQTLEEVLDVDEITLIPTGNGDIIDGAREQWNDGSNTLCIRPGVVVTYDRNYVSNQLLREHGIKVIEIPGSELVRGRGGPRCMSQPLIREDL.

Cys401 acts as the Amidino-cysteine intermediate in catalysis.

This sequence belongs to the arginine deiminase family.

It is found in the cytoplasm. The catalysed reaction is L-arginine + H2O = L-citrulline + NH4(+). Its pathway is amino-acid degradation; L-arginine degradation via ADI pathway; carbamoyl phosphate from L-arginine: step 1/2. The polypeptide is Arginine deiminase (Staphylococcus epidermidis (strain ATCC 35984 / DSM 28319 / BCRC 17069 / CCUG 31568 / BM 3577 / RP62A)).